The primary structure comprises 377 residues: N-acetyldiaminopimelate deacetylase (377 aa).

Residue aspartate 69 is part of the active site. The Proton acceptor role is filled by glutamate 128.

The protein belongs to the peptidase M20A family. N-acetyldiaminopimelate deacetylase subfamily.

The catalysed reaction is N-acetyl-(2S,6S)-2,6-diaminopimelate + H2O = (2S,6S)-2,6-diaminopimelate + acetate. The protein operates within amino-acid biosynthesis; L-lysine biosynthesis via DAP pathway; LL-2,6-diaminopimelate from (S)-tetrahydrodipicolinate (acetylase route): step 3/3. Functionally, catalyzes the conversion of N-acetyl-diaminopimelate to diaminopimelate and acetate. The polypeptide is N-acetyldiaminopimelate deacetylase (Streptococcus sanguinis (strain SK36)).